A 565-amino-acid polypeptide reads, in one-letter code: Proline--tRNA ligase (565 aa).

This sequence belongs to the class-II aminoacyl-tRNA synthetase family. ProS type 1 subfamily. Homodimer.

Its subcellular location is the cytoplasm. It catalyses the reaction tRNA(Pro) + L-proline + ATP = L-prolyl-tRNA(Pro) + AMP + diphosphate. Its function is as follows. Catalyzes the attachment of proline to tRNA(Pro) in a two-step reaction: proline is first activated by ATP to form Pro-AMP and then transferred to the acceptor end of tRNA(Pro). As ProRS can inadvertently accommodate and process non-cognate amino acids such as alanine and cysteine, to avoid such errors it has two additional distinct editing activities against alanine. One activity is designated as 'pretransfer' editing and involves the tRNA(Pro)-independent hydrolysis of activated Ala-AMP. The other activity is designated 'posttransfer' editing and involves deacylation of mischarged Ala-tRNA(Pro). The misacylated Cys-tRNA(Pro) is not edited by ProRS. This Francisella tularensis subsp. novicida (strain U112) protein is Proline--tRNA ligase.